The sequence spans 557 residues: Nucleoporin AMO1 (557 aa).

The C3H1-type zinc-finger motif lies at 1 to 25 (MTVCRFWQQGYCRNGNACKFEHPPK). Residues 114–141 (QGALNEIQAAYQAAQQQIQNTLQNIPAA) are a coiled coil. The interval 161 to 297 (ESSKGSSTGG…SALGPKPGAF (137 aa)) is disordered. SXFG repeat units follow at residues 171–174 (SVFG), 200–203 (SAFG), 213–216 (SAFG), 228–231 (SAFG), 240–243 (SAFG), 249–252 (STFG), 262–265 (SAFG), 282–285 (SAFG), 303–306 (SAFG), and 314–317 (SPFG). Positions 195–215 (STPSTSAFGQPSPLGQKSSAF) are enriched in polar residues. A compositionally biased stretch (polar residues) spans 243 to 253 (GSPQTGSTFGQ). Residues 315 to 463 (PFGAAAQATQ…DLLSYATKNP (149 aa)) form a disordered region. Composition is skewed to polar residues over residues 321–338 (QATQ…QAAN) and 351–366 (GQPS…GQPS). SXFG repeat units lie at residues 348-351 (SAFG), 370-373 (SAFG), 387-390 (SLFG), and 407-410 (SAFG). Residues 367–385 (TQSSAFGQQQPQQAGTFGS) show a composition bias toward low complexity. A compositionally biased stretch (polar residues) spans 388–429 (LFGQQQQQPSNVFGQPSTTSAFGSQAATSGFSQLGNATSTIG). The span at 430 to 443 (ASPAGAQAPASKSP) shows a compositional bias: low complexity.

As to quaternary structure, the nuclear pore complex (NPC) constitutes the exclusive means of nucleocytoplasmic transport. NPCs allow the passive diffusion of ions and small molecules and the active, nuclear transport receptor-mediated bidirectional transport of macromolecules such as proteins, RNAs, ribonucleoparticles (RNPs), and ribosomal subunits across the nuclear envelope. The 55-60 MDa NPC is composed of at least 28 different subunits: AMO1, ELYS, GLE1, GLE2, MLP1, NDC1, NIC96, NSP1, NUP133, NUP145, NUP152, NUP159, NUP170, NUP188, NUP192, NUP37, NUP49, NUP53, NUP56, NUP57, NUP82, NUP84, NUP85, POM152, POM33, POM34, SEC13 and SEH1. Due to its 8-fold rotational symmetry, all subunits are present with 8 copies or multiples thereof.

The protein localises to the nucleus. It is found in the nuclear pore complex. Its subcellular location is the nucleus membrane. Its function is as follows. Functions as a component of the nuclear pore complex (NPC). NPC components, collectively referred to as nucleoporins (NUPs), can play the role of both NPC structural components and of docking or interaction partners for transiently associated nuclear transport factors. Active directional transport is assured by both, a Phe-Gly (FG) repeat affinity gradient for these transport factors across the NPC and a transport cofactor concentration gradient across the nuclear envelope (GSP1 and GSP2 GTPases associated predominantly with GTP in the nucleus, with GDP in the cytoplasm). AMO1 is specifically important for nuclear protein and mRNA export. The chain is Nucleoporin AMO1 (AMO1) from Chaetomium thermophilum (strain DSM 1495 / CBS 144.50 / IMI 039719) (Thermochaetoides thermophila).